The chain runs to 87 residues: Phosphoribosyl-ATP pyrophosphatase (87 aa).

The protein belongs to the PRA-PH family.

It localises to the cytoplasm. The catalysed reaction is 1-(5-phospho-beta-D-ribosyl)-ATP + H2O = 1-(5-phospho-beta-D-ribosyl)-5'-AMP + diphosphate + H(+). Its pathway is amino-acid biosynthesis; L-histidine biosynthesis; L-histidine from 5-phospho-alpha-D-ribose 1-diphosphate: step 2/9. This Corynebacterium diphtheriae (strain ATCC 700971 / NCTC 13129 / Biotype gravis) protein is Phosphoribosyl-ATP pyrophosphatase.